A 460-amino-acid chain; its full sequence is Diguanylate cyclase DosC (460 aa).

H98 provides a ligand contact to heme. The GGDEF domain occupies 325–458 (TPLSVLIIDV…GRNRVELWKA (134 aa)). D333 is a binding site for Mg(2+). The substrate site is built by N341 and D350. Residue D376 coordinates Mg(2+). The active-site Proton acceptor is the D376.

Heme is required as a cofactor. The cofactor is Mg(2+).

The catalysed reaction is 2 GTP = 3',3'-c-di-GMP + 2 diphosphate. It functions in the pathway purine metabolism; 3',5'-cyclic di-GMP biosynthesis. Globin-coupled heme-based oxygen sensor protein displaying diguanylate cyclase (DGC) activity in response to oxygen availability. Thus, catalyzes the synthesis of cyclic diguanylate (c-di-GMP) via the condensation of 2 GTP molecules. Cyclic-di-GMP is a second messenger which controls cell surface-associated traits in bacteria. The sequence is that of Diguanylate cyclase DosC (dosC) from Shigella boydii serotype 4 (strain Sb227).